We begin with the raw amino-acid sequence, 430 residues long: Replication factor C large subunit (430 aa).

An ATP-binding site is contributed by 75-82 (GPPGTGKT).

The protein belongs to the activator 1 small subunits family. RfcL subfamily. As to quaternary structure, heteromultimer composed of small subunits (RfcS) and large subunits (RfcL).

Functionally, part of the RFC clamp loader complex which loads the PCNA sliding clamp onto DNA. In Nanoarchaeum equitans (strain Kin4-M), this protein is Replication factor C large subunit.